We begin with the raw amino-acid sequence, 512 residues long: Monocarboxylate transporter 10 (512 aa).

Positions 1 to 44 (MVPSQEEPAAERETNEAQPPGPAPSDDAPLPGPGPSDVSDVAAE) are disordered. Residues 1-63 (MVPSQEEPAA…AGSEPPVPPE (63 aa)) are Cytoplasmic-facing. A helical transmembrane segment spans residues 64-84 (GGWGWLVMLAAMWCNGSVFGI). The Extracellular segment spans residues 85 to 111 (QNAYGVLFVSMLDTFKAKDDDNMAFKT). Residues 112-132 (AWVGSLSMGMIFFCCPIVSVF) form a helical membrane-spanning segment. Topologically, residues 133 to 141 (TDMFGCRRT) are cytoplasmic. A helical membrane pass occupies residues 142 to 162 (AVVGAAVGFIGLMSSSFVSSI). Residues 163-168 (EPLYLT) lie on the Extracellular side of the membrane. The helical transmembrane segment at 169–189 (YGIIFACGCSFAYQPSLVILG) threads the bilayer. Residues 190-201 (HYFKKRLGLVNG) lie on the Cytoplasmic side of the membrane. The helical transmembrane segment at 202–222 (IVTAGSSVFTILLPLLLGNLI) threads the bilayer. Over 223-232 (SSVKLFNTLR) the chain is Extracellular. A helical membrane pass occupies residues 233 to 253 (ILCIFMFVLFLAGFTYRPLVP). The Cytoplasmic segment spans residues 254–291 (STKEKESGGSRSSFFSRRKLSPPKKVFNFALFKETTYA). Serine 260 is modified (phosphoserine). A helical transmembrane segment spans residues 292-312 (VWAAGIPLALFGYFVPYVHLM). Residues 313 to 326 (NHVKERFQDVNNKE) lie on the Extracellular side of the membrane. A helical transmembrane segment spans residues 327 to 347 (VLFMCIGITSGVGRLLFGRIA). Residues 348–362 (DYLPGVKKVYLQVLS) lie on the Cytoplasmic side of the membrane. A helical transmembrane segment spans residues 363–383 (FFFIGLMSMMIPLCSAFGALI). Position 384 (alanine 384) is a topological domain, extracellular. The chain crosses the membrane as a helical span at residues 385 to 405 (VCLAMGLFDGCFISIMAPIAF). At 406–416 (ELVGPQDASQA) the chain is on the cytoplasmic side. The helical transmembrane segment at 417 to 437 (IGFLLGFMSIPMTVGPPIAGL) threads the bilayer. At 438-448 (LHDKLGTYDVA) the chain is on the extracellular side. The chain crosses the membrane as a helical span at residues 449-469 (FYLAGIPPFVGGVVLCLIPWI). Over 470 to 512 (HSKKQRKISKNAGGEKMEKMLENQSSLLSGSSGIFKKDSASII) the chain is Cytoplasmic. 4 positions are modified to phosphoserine: serine 495, serine 498, serine 500, and serine 501.

It belongs to the major facilitator superfamily. Monocarboxylate porter (TC 2.A.1.13) family. Post-translationally, not N-glycosylated. Highly expressed in small intestine, particularly in jejunum and ileum, scarcely in colon and substantially in kidney, liver and skeletal muscle. In the brain expression is low and appears to be restricted to a subset of neurons, microglia cells, and oligodendrocytes.

The protein resides in the cell membrane. Its subcellular location is the basolateral cell membrane. It carries out the reaction L-tryptophan(in) = L-tryptophan(out). The enzyme catalyses L-tyrosine(in) = L-tyrosine(out). It catalyses the reaction L-phenylalanine(in) = L-phenylalanine(out). The catalysed reaction is 3,3',5-triiodo-L-thyronine(out) = 3,3',5-triiodo-L-thyronine(in). It carries out the reaction L-thyroxine(out) = L-thyroxine(in). In terms of biological role, sodium- and proton-independent thyroid hormones and aromatic acids transporter. Mediates both uptake and efflux of 3,5,3'-triiodothyronine (T3) and 3,5,3',5'-tetraiodothyronine (T4) with high affinity, suggesting a role in the homeostasis of thyroid hormone levels. Responsible for low affinity bidirectional transport of the aromatic amino acids, such as phenylalanine, tyrosine, tryptophan and L-3,4-dihydroxyphenylalanine (L-dopa). Plays an important role in homeostasis of aromatic amino acids. The protein is Monocarboxylate transporter 10 (Slc16a10) of Mus musculus (Mouse).